We begin with the raw amino-acid sequence, 65 residues long: Small ribosomal subunit protein eS31 (65 aa).

Zn(2+) contacts are provided by Cys36, Cys39, Cys55, and Cys58. The C4-type zinc-finger motif lies at 36-58; that stretch reads CPKCGSVMAFHREPVPRWHCGKC.

This sequence belongs to the eukaryotic ribosomal protein eS31 family. As to quaternary structure, part of the 30S ribosomal subunit. It depends on Zn(2+) as a cofactor.

This is Small ribosomal subunit protein eS31 from Pyrobaculum calidifontis (strain DSM 21063 / JCM 11548 / VA1).